The chain runs to 104 residues: V-type ATP synthase subunit F (104 aa).

It belongs to the V-ATPase F subunit family.

Its function is as follows. Produces ATP from ADP in the presence of a proton gradient across the membrane. This chain is V-type ATP synthase subunit F, found in Thermus thermophilus (strain ATCC BAA-163 / DSM 7039 / HB27).